The primary structure comprises 449 residues: Methionine aminopeptidase 2 (449 aa).

The segment at 1–91 (MAAQAAPELA…PRIPLTTLFP (91 aa)) is disordered. A compositionally biased stretch (acidic residues) spans 34 to 50 (EEAENEGDSDDDRDDEQ). The span at 61-75 (KKKKKKRPKKKKKTA) shows a compositional bias: basic residues. Histidine 199 is a substrate binding site. Residues aspartate 219, aspartate 230, and histidine 299 each coordinate a divalent metal cation. Histidine 307 contacts substrate. 2 residues coordinate a divalent metal cation: glutamate 335 and glutamate 430.

Belongs to the peptidase M24A family. Methionine aminopeptidase eukaryotic type 2 subfamily. Co(2+) serves as cofactor. It depends on Zn(2+) as a cofactor. The cofactor is Mn(2+). Fe(2+) is required as a cofactor.

It localises to the cytoplasm. The enzyme catalyses Release of N-terminal amino acids, preferentially methionine, from peptides and arylamides.. Its function is as follows. Cotranslationally removes the N-terminal methionine from nascent proteins. The N-terminal methionine is often cleaved when the second residue in the primary sequence is small and uncharged (Met-Ala-, Cys, Gly, Pro, Ser, Thr, or Val). The chain is Methionine aminopeptidase 2 from Arthroderma benhamiae (strain ATCC MYA-4681 / CBS 112371) (Trichophyton mentagrophytes).